The following is a 54-amino-acid chain: UPF0391 membrane protein msr3702 (54 aa).

The next 2 membrane-spanning stretches (helical) occupy residues 4 to 24 (WALVFLVVAIIAGALGFGGIA) and 30 to 50 (IAQILFFIFLAFLVISLLAGL).

This sequence belongs to the UPF0391 family.

It is found in the cell membrane. The chain is UPF0391 membrane protein msr3702 from Mesorhizobium japonicum (strain LMG 29417 / CECT 9101 / MAFF 303099) (Mesorhizobium loti (strain MAFF 303099)).